The primary structure comprises 859 residues: Photoactivated adenylate cyclase subunit beta (859 aa).

A BLUF 1 domain is found at 56 to 149 (LRRLMYLSKS…GRMYGDWHMK (94 aa)). The region spanning 205–333 (VVTFIYLVEF…DCINTTSRIA (129 aa)) is the Guanylate cyclase 1 domain. A disordered region spans residues 420-443 (RPPIFDDTPKGNPRPRTPGYGGRQ). Residues 471–563 (LTTLTYISQA…RVYPSEWTLT (93 aa)) enclose the BLUF 2 domain. The Guanylate cyclase 2 domain occupies 619-748 (VMLATDICSF…AVSARVMEVE (130 aa)). Residues 813 to 859 (AARSGEKPLTEPEEAKPDFRVSPGRVRHGDSGRRSNSAQGKRSIQVR) are disordered. Basic and acidic residues predominate over residues 815-831 (RSGEKPLTEPEEAKPDF). Polar residues predominate over residues 846 to 859 (RSNSAQGKRSIQVR).

The protein belongs to the adenylyl cyclase class-4/guanylyl cyclase family. Heterotetramer of two alpha and two beta subunits. Requires FAD as cofactor.

Its subcellular location is the cell projection. The protein localises to the cilium. It localises to the flagellum. The catalysed reaction is ATP = 3',5'-cyclic AMP + diphosphate. Its activity is regulated as follows. Activity increased by up to 80-fold under blue light. Acts as a blue light photoreceptor for the step-up photophobic response. Mediates photoavoidance. In Euglena gracilis, this protein is Photoactivated adenylate cyclase subunit beta.